Consider the following 147-residue polypeptide: Protegrin-2 (147 aa).

An N-terminal signal peptide occupies residues M1–A29. A propeptide spanning residues Q30–V130 is cleaved from the precursor. The disordered stretch occupies residues D61–V80. Cystine bridges form between C85-C96, C107-C124, C136-C145, and C138-C143. V146 bears the Valine amide mark.

Belongs to the cathelicidin family.

The protein localises to the secreted. Functionally, microbicidal activity. Active against E.coli, Listeria monocytogenes and C.albicans, in vitro. This chain is Protegrin-2 (NPG2), found in Sus scrofa (Pig).